A 356-amino-acid chain; its full sequence is Sensor protein BasS (356 aa).

Residues 1 to 13 are Cytoplasmic-facing; that stretch reads MRFQRRAMTLRQR. The helical transmembrane segment at 14 to 34 threads the bilayer; sequence LMLTIGLILLVFQLISTFWLW. Residues 35-64 are Periplasmic-facing; sequence HESTEQIQLFEQALRDNRNNDRHIMHEIRE. The chain crosses the membrane as a helical span at residues 65–88; the sequence is AVASLIVPGVFMVSLTLLICYQAV. In terms of domain architecture, HAMP spans 89–141; that stretch reads RRITRPLAELQKELEARTADNLAPIAIHSSTLEIESVVSAINQLVTRLTTTLD. Over 89-356 the chain is Cytoplasmic; sequence RRITRPLAEL…TRAWVLLKKA (268 aa). A Histidine kinase domain is found at 149–356; that stretch reads DVAHELRTPL…TRAWVLLKKA (208 aa). His-152 bears the Phosphohistidine; by autocatalysis mark.

Post-translationally, autophosphorylated.

Its subcellular location is the cell inner membrane. It catalyses the reaction ATP + protein L-histidine = ADP + protein N-phospho-L-histidine.. Functionally, member of the two-component regulatory system BasS/BasR. Autophosphorylates and activates BasR by phosphorylation. Plays a role in the adaptation of the organism to the host environment, in particular to neutrophils, and therefore it plays a role in virulence as well. In Salmonella typhimurium (strain LT2 / SGSC1412 / ATCC 700720), this protein is Sensor protein BasS (basS).